A 235-amino-acid chain; its full sequence is Fibrillarin-like rRNA/tRNA 2'-O-methyltransferase (235 aa).

S-adenosyl-L-methionine is bound by residues 91–92 (TT), 110–111 (EF), 137–138 (DA), and 157–160 (DVAQ).

It belongs to the methyltransferase superfamily. Fibrillarin family. Interacts with nop5. Component of box C/D small ribonucleoprotein (sRNP) particles that contain rpl7ae, FlpA and nop5, plus a guide RNA.

In terms of biological role, involved in pre-rRNA and tRNA processing. Utilizes the methyl donor S-adenosyl-L-methionine to catalyze the site-specific 2'-hydroxyl methylation of ribose moieties in rRNA and tRNA. Site specificity is provided by a guide RNA that base pairs with the substrate. Methylation occurs at a characteristic distance from the sequence involved in base pairing with the guide RNA. The sequence is that of Fibrillarin-like rRNA/tRNA 2'-O-methyltransferase from Pyrobaculum neutrophilum (strain DSM 2338 / JCM 9278 / NBRC 100436 / V24Sta) (Thermoproteus neutrophilus).